Reading from the N-terminus, the 464-residue chain is Calcitonin gene-related peptide type 1 receptor (464 aa).

The signal sequence occupies residues Met-1–Ala-23. Over Glu-24–Leu-139 the chain is Extracellular. 6 N-linked (GlcNAc...) asparagine glycosylation sites follow: Asn-30, Asn-66, Asn-118, Asn-123, Asn-128, and Asn-129. 3 disulfides stabilise this stretch: Cys-48–Cys-74, Cys-65–Cys-105, and Cys-88–Cys-127. The chain crosses the membrane as a helical span at residues Asn-140–Phe-164. At Tyr-165–Thr-175 the chain is on the cytoplasmic side. A helical transmembrane segment spans residues Leu-176 to Val-198. The Extracellular portion of the chain corresponds to Ala-199 to Pro-209. The chain crosses the membrane as a helical span at residues Val-210–His-238. The Cytoplasmic portion of the chain corresponds to Thr-239–Leu-252. The helical transmembrane segment at Met-253 to Ala-273 threads the bilayer. Over Arg-274–His-289 the chain is Extracellular. Residues Thr-288–His-289 are required for RAMP3 interaction. Residues Leu-290–Arg-314 form a helical membrane-spanning segment. Over Val-315–Asn-329 the chain is Cytoplasmic. Residues Leu-330–Leu-351 form a helical membrane-spanning segment. The Extracellular segment spans residues Phe-352–Asp-366. Residues Tyr-367 to Phe-387 traverse the membrane as a helical segment. Residues Asn-388–Met-464 are Cytoplasmic-facing. Residues Ser-420 and Ser-445 each carry the phosphoserine modification.

It belongs to the G-protein coupled receptor 2 family. In terms of assembly, heterodimer of CALCRL and RAMP1; the receptor complex functions as CGRP receptor. Heterodimer of CALCRL and RAMP2 or CALCRL and RAMP3; the complexes function as adrenomedullin receptor.

Its subcellular location is the cell membrane. G protein-coupled receptor which specificity is determined by its interaction with receptor-activity-modifying proteins (RAMPs). Together with RAMP1, form the receptor complex for calcitonin-gene-related peptides CALCA/CGRP1 and CALCB/CGRP2. Together with RAMP2 or RAMP3, function as receptor complexes for adrenomedullin (ADM and ADM2). Ligand binding causes a conformation change that triggers signaling via guanine nucleotide-binding proteins (G proteins) and modulates the activity of downstream effectors. Activates cAMP-dependent pathway. This chain is Calcitonin gene-related peptide type 1 receptor, found in Rattus norvegicus (Rat).